The sequence spans 60 residues: Large ribosomal subunit protein bL32 (60 aa).

The protein belongs to the bacterial ribosomal protein bL32 family.

This is Large ribosomal subunit protein bL32 from Ruminiclostridium cellulolyticum (strain ATCC 35319 / DSM 5812 / JCM 6584 / H10) (Clostridium cellulolyticum).